The primary structure comprises 651 residues: Translation factor GUF1 homolog, mitochondrial (651 aa).

The N-terminal 26 residues, 1 to 26 (MAVTRAAAPMVGNCSSAMLIIGRRYF), are a transit peptide targeting the mitochondrion. The tr-type G domain maps to 51-228 (KKIRNFGIVA…AVVERLPPPK (178 aa)). GTP is bound by residues 60–67 (AHVDHGKS), 121–125 (DTPGH), and 175–178 (NKVD).

The protein belongs to the TRAFAC class translation factor GTPase superfamily. Classic translation factor GTPase family. LepA subfamily.

Its subcellular location is the mitochondrion inner membrane. The catalysed reaction is GTP + H2O = GDP + phosphate + H(+). In terms of biological role, promotes mitochondrial protein synthesis. May act as a fidelity factor of the translation reaction, by catalyzing a one-codon backward translocation of tRNAs on improperly translocated ribosomes. Binds to mitochondrial ribosomes in a GTP-dependent manner. This is Translation factor GUF1 homolog, mitochondrial from Brugia malayi (Filarial nematode worm).